A 120-amino-acid chain; its full sequence is NAD(P)H-quinone oxidoreductase subunit 3, chloroplastic (120 aa).

The next 3 helical transmembrane spans lie at 9–29, 64–84, and 88–108; these read IFWA…LISG, MFAL…PWAM, and VLGV…ILGL.

It belongs to the complex I subunit 3 family. In terms of assembly, NDH is composed of at least 16 different subunits, 5 of which are encoded in the nucleus.

Its subcellular location is the plastid. It is found in the chloroplast thylakoid membrane. The catalysed reaction is a plastoquinone + NADH + (n+1) H(+)(in) = a plastoquinol + NAD(+) + n H(+)(out). It catalyses the reaction a plastoquinone + NADPH + (n+1) H(+)(in) = a plastoquinol + NADP(+) + n H(+)(out). NDH shuttles electrons from NAD(P)H:plastoquinone, via FMN and iron-sulfur (Fe-S) centers, to quinones in the photosynthetic chain and possibly in a chloroplast respiratory chain. The immediate electron acceptor for the enzyme in this species is believed to be plastoquinone. Couples the redox reaction to proton translocation, and thus conserves the redox energy in a proton gradient. In Draba nemorosa (Woodland whitlowgrass), this protein is NAD(P)H-quinone oxidoreductase subunit 3, chloroplastic.